A 344-amino-acid chain; its full sequence is AA9 family lytic polysaccharide monooxygenase J (344 aa).

The N-terminal stretch at 1–20 (MKSSLLVVLTAGLAVRDAIA) is a signal peptide. Cu(2+)-binding residues include H21 and H99. A disulfide bridge connects residues C58 and C194. Residues H180 and Q189 each coordinate O2. Y191 contributes to the Cu(2+) binding site. The disordered stretch occupies residues 272–301 (PGGKPASGGSDGNAPEVAEPSGGEGSPSAP). Positions 285–301 (APEVAEPSGGEGSPSAP) are enriched in low complexity. The 38-residue stretch at 304–341 (CEVAAYGQCGGDQYSGCTQCASGYTCKAVSPPYYSQCA) folds into the CBM1 domain.

This sequence belongs to the polysaccharide monooxygenase AA9 family. It depends on Cu(2+) as a cofactor.

The protein localises to the secreted. The enzyme catalyses [(1-&gt;4)-beta-D-glucosyl]n+m + reduced acceptor + O2 = 4-dehydro-beta-D-glucosyl-[(1-&gt;4)-beta-D-glucosyl]n-1 + [(1-&gt;4)-beta-D-glucosyl]m + acceptor + H2O.. Its function is as follows. Lytic polysaccharide monooxygenase (LPMO) that depolymerizes crystalline and amorphous polysaccharides via the oxidation of scissile alpha- or beta-(1-4)-glycosidic bonds, yielding C4 oxidation products. Catalysis by LPMOs requires the reduction of the active-site copper from Cu(II) to Cu(I) by a reducing agent and H(2)O(2) or O(2) as a cosubstrate. This Neurospora crassa (strain ATCC 24698 / 74-OR23-1A / CBS 708.71 / DSM 1257 / FGSC 987) protein is AA9 family lytic polysaccharide monooxygenase J (gh61-10).